Consider the following 169-residue polypeptide: Cyclic pyranopterin monophosphate synthase (169 aa).

Residues Leu-83–His-85 and Met-121–Glu-122 contribute to the substrate site. Asp-136 is an active-site residue.

The protein belongs to the MoaC family. In terms of assembly, homohexamer; trimer of dimers.

The catalysed reaction is (8S)-3',8-cyclo-7,8-dihydroguanosine 5'-triphosphate = cyclic pyranopterin phosphate + diphosphate. The protein operates within cofactor biosynthesis; molybdopterin biosynthesis. Its function is as follows. Catalyzes the conversion of (8S)-3',8-cyclo-7,8-dihydroguanosine 5'-triphosphate to cyclic pyranopterin monophosphate (cPMP). This is Cyclic pyranopterin monophosphate synthase from Rhodospirillum centenum (strain ATCC 51521 / SW).